We begin with the raw amino-acid sequence, 243 residues long: Leucyl/phenylalanyl-tRNA--protein transferase (243 aa).

Belongs to the L/F-transferase family.

The protein resides in the cytoplasm. It carries out the reaction N-terminal L-lysyl-[protein] + L-leucyl-tRNA(Leu) = N-terminal L-leucyl-L-lysyl-[protein] + tRNA(Leu) + H(+). The enzyme catalyses N-terminal L-arginyl-[protein] + L-leucyl-tRNA(Leu) = N-terminal L-leucyl-L-arginyl-[protein] + tRNA(Leu) + H(+). The catalysed reaction is L-phenylalanyl-tRNA(Phe) + an N-terminal L-alpha-aminoacyl-[protein] = an N-terminal L-phenylalanyl-L-alpha-aminoacyl-[protein] + tRNA(Phe). Its function is as follows. Functions in the N-end rule pathway of protein degradation where it conjugates Leu, Phe and, less efficiently, Met from aminoacyl-tRNAs to the N-termini of proteins containing an N-terminal arginine or lysine. The sequence is that of Leucyl/phenylalanyl-tRNA--protein transferase from Saccharophagus degradans (strain 2-40 / ATCC 43961 / DSM 17024).